A 202-amino-acid polypeptide reads, in one-letter code: Methylthioribulose-1-phosphate dehydratase (202 aa).

Zn(2+)-binding residues include histidine 93 and histidine 95.

It belongs to the aldolase class II family. MtnB subfamily. The cofactor is Zn(2+).

It catalyses the reaction 5-(methylsulfanyl)-D-ribulose 1-phosphate = 5-methylsulfanyl-2,3-dioxopentyl phosphate + H2O. It participates in amino-acid biosynthesis; L-methionine biosynthesis via salvage pathway; L-methionine from S-methyl-5-thio-alpha-D-ribose 1-phosphate: step 2/6. In terms of biological role, catalyzes the dehydration of methylthioribulose-1-phosphate (MTRu-1-P) into 2,3-diketo-5-methylthiopentyl-1-phosphate (DK-MTP-1-P). This Klebsiella pneumoniae subsp. pneumoniae (strain ATCC 700721 / MGH 78578) protein is Methylthioribulose-1-phosphate dehydratase.